A 57-amino-acid chain; its full sequence is Protein 19.3 (57 aa).

The sequence is that of Protein 19.3 from Escherichia coli (Bacteriophage T7).